The chain runs to 321 residues: Ribonuclease Z (321 aa).

Residues His62, His64, Asp66, His67, His139, Asp209, and His268 each coordinate Zn(2+). Catalysis depends on Asp66, which acts as the Proton acceptor.

The protein belongs to the RNase Z family. In terms of assembly, homodimer. Zn(2+) is required as a cofactor.

The catalysed reaction is Endonucleolytic cleavage of RNA, removing extra 3' nucleotides from tRNA precursor, generating 3' termini of tRNAs. A 3'-hydroxy group is left at the tRNA terminus and a 5'-phosphoryl group is left at the trailer molecule.. In terms of biological role, zinc phosphodiesterase, which displays some tRNA 3'-processing endonuclease activity. Probably involved in tRNA maturation, by removing a 3'-trailer from precursor tRNA. This chain is Ribonuclease Z, found in Pseudomonas putida (strain W619).